We begin with the raw amino-acid sequence, 354 residues long: Probable RNA methyltransferase AZOSEA28700 (354 aa).

The Proton acceptor role is filled by glutamate 88. The Radical SAM core domain occupies 91–317 (LLPRDGLCVS…TKLRHSAGQD (227 aa)). Cysteine 98 and cysteine 322 are joined by a disulfide. Positions 105, 109, and 112 each coordinate [4Fe-4S] cluster. S-adenosyl-L-methionine is bound by residues 150-151 (GE), serine 180, 203-205 (SLH), and asparagine 279. Cysteine 322 (S-methylcysteine intermediate) is an active-site residue.

The protein belongs to the radical SAM superfamily. RlmN family. Requires [4Fe-4S] cluster as cofactor.

The protein resides in the cytoplasm. This is Probable RNA methyltransferase AZOSEA28700 from Aromatoleum aromaticum (strain DSM 19018 / LMG 30748 / EbN1) (Azoarcus sp. (strain EbN1)).